The primary structure comprises 152 residues: Large ribosomal subunit protein bL21 (152 aa).

A disordered region spans residues 115-152 (VTSISNGEKPKKATTSAKPNTKKPSTAVKSSKVEKTPE). Residues 127–143 (ATTSAKPNTKKPSTAVK) show a composition bias toward polar residues.

Belongs to the bacterial ribosomal protein bL21 family. As to quaternary structure, part of the 50S ribosomal subunit. Contacts protein L20.

Functionally, this protein binds to 23S rRNA in the presence of protein L20. The chain is Large ribosomal subunit protein bL21 from Prochlorococcus marinus (strain SARG / CCMP1375 / SS120).